Here is a 446-residue protein sequence, read N- to C-terminus: Low-affinity gluconate transporter (446 aa).

Position 1 (methionine 1) is a topological domain, cytoplasmic. A helical membrane pass occupies residues 2 to 22 (TTLTLVLTAVGSVLLLLFLVM). The Periplasmic portion of the chain corresponds to 23–26 (KARM). The helical transmembrane segment at 27 to 47 (HAFLALMVVSMGAGLFSGMPL) threads the bilayer. Over 48–58 (DKIAATMEKGM) the chain is Cytoplasmic. The helical transmembrane segment at 59 to 79 (GGTLGFLAVVVALGAMFGKIL) threads the bilayer. Residues 80–109 (HETGAVDQIAVKMLKSFGHSRAHYAIGLAG) are Periplasmic-facing. Residues 110–130 (LVCALPLFFEVAIVLLISVAF) traverse the membrane as a helical segment. Residues 131 to 142 (SMARHTGTNLVK) lie on the Cytoplasmic side of the membrane. The helical transmembrane segment at 143-163 (LVIPLFAGVAAAAAFLVPGPA) threads the bilayer. Topologically, residues 164–176 (PMLLASQMNADFG) are periplasmic. Residues 177 to 197 (WMILIGLCAAIPGMIIAGPLW) traverse the membrane as a helical segment. Residues 198-225 (GNFISRYVELHIPDDISEPHLGEGKMPS) lie on the Cytoplasmic side of the membrane. Residues 226–246 (FGFSLSLILLPLVLVGLKTIA) form a helical membrane-spanning segment. The Periplasmic segment spans residues 247-261 (ARFVPEGSTAYEWFE). Residues 262-282 (FIGHPFTAILVACLVAIYGLA) form a helical membrane-spanning segment. At 283–294 (MRQGMPKDKVME) the chain is on the cytoplasmic side. Residues 295-315 (ICGHALQPAGIILLVIGAGGV) traverse the membrane as a helical segment. The Periplasmic portion of the chain corresponds to 316-330 (FKQVLVDSGVGPALG). Residues 331 to 351 (EALTGMGLPIAITCFVLAAAV) traverse the membrane as a helical segment. Position 352 (arginine 352) is a topological domain, cytoplasmic. The chain crosses the membrane as a helical span at residues 353-373 (IIQGSATVACLTAVGLVMPVI). Over 374–387 (EQLNYSGAQMAALS) the chain is Periplasmic. Residues 388–408 (ICIAGGSIVVSHVNDAGFWLF) form a helical membrane-spanning segment. At 409–424 (GKFTGATEAETLKTWT) the chain is on the cytoplasmic side. The chain crosses the membrane as a helical span at residues 425 to 445 (MMETILGTVGAIVGMIAFQLL). Residue serine 446 is a topological domain, periplasmic.

The protein belongs to the GntP permease family.

The protein resides in the cell inner membrane. Its function is as follows. Part of the gluconate utilization system Gnt-I; low-affinity intake of gluconate. This Escherichia coli O157:H7 protein is Low-affinity gluconate transporter (gntU).